A 1755-amino-acid polypeptide reads, in one-letter code: Transposon Ty1-DR5 Gag-Pol polyprotein (1755 aa).

3 stretches are compositionally biased toward polar residues: residues 1 to 10 (MESQQLSNYP), 48 to 60 (TKAN…TPAS), and 127 to 152 (QSQF…GNTF). Disordered stretches follow at residues 1–93 (MESQ…MMTQ), 126–173 (PQSQ…RPPP), and 352–421 (GSRN…SKST). The segment covering 153–165 (TDSSSADSDMTST) has biased composition (low complexity). Positions 299–401 (NNGIHINNKV…NSKSKTARAH (103 aa)) are RNA-binding. Residues 402–418 (NVSTSNNSPSTDNDSIS) show a composition bias toward low complexity. The active-site For protease activity; shared with dimeric partner is Asp461. Residues 583–640 (NVHTSESTRKYPYPFIHRMLAHANAQTIRYSLKNNTITYFNESDVDWSSAIDYQCPDC) form an integrase-type zinc finger-like region. In terms of domain architecture, Integrase catalytic spans 660-835 (NSYEPFQYLH…AGLDISTLLP (176 aa)). Mg(2+)-binding residues include Asp671 and Asp736. 3 disordered regions span residues 956–1087 (SKAV…ETEK), 1092–1111 (RSPS…NIVP), and 1130–1187 (DLPL…DNET). The segment covering 960–969 (SPTDSTPPST) has biased composition (low complexity). The span at 1005–1015 (STPQISNIEST) shows a compositional bias: polar residues. Basic and acidic residues predominate over residues 1038–1053 (ESSHASKSKDFRHSDS). Polar residues-rich tracts occupy residues 1054-1082 (YSEN…QISD) and 1101-1111 (PENNSSHNIVP). The Bipartite nuclear localization signal motif lies at 1178–1212 (KKRSLEDNETEIKVSRDTWNTKNMRSLEPPRSKKR). In terms of domain architecture, Reverse transcriptase Ty1/copia-type spans 1338–1476 (NNYYITQLDI…DILGLEIKYQ (139 aa)). The Mg(2+) site is built by Asp1346, Asp1427, Asp1428, Asp1610, Glu1652, and Asp1685. Positions 1610–1752 (DASYGNQPYY…IKTFKLLTNK (143 aa)) constitute an RNase H Ty1/copia-type domain.

In terms of assembly, the capsid protein forms a homotrimer, from which the VLPs are assembled. The protease is a homodimer, whose active site consists of two apposed aspartic acid residues. Post-translationally, initially, virus-like particles (VLPs) are composed of the structural unprocessed proteins Gag and Gag-Pol, and also contain the host initiator methionine tRNA (tRNA(i)-Met) which serves as a primer for minus-strand DNA synthesis, and a dimer of genomic Ty RNA. Processing of the polyproteins occurs within the particle and proceeds by an ordered pathway, called maturation. First, the protease (PR) is released by autocatalytic cleavage of the Gag-Pol polyprotein yielding capsid protein p45 and a Pol-p154 precursor protein. This cleavage is a prerequisite for subsequent processing of Pol-p154 at the remaining sites to release the mature structural and catalytic proteins. Maturation takes place prior to the RT reaction and is required to produce transposition-competent VLPs.

It localises to the cytoplasm. The protein resides in the nucleus. It catalyses the reaction DNA(n) + a 2'-deoxyribonucleoside 5'-triphosphate = DNA(n+1) + diphosphate. It carries out the reaction Endonucleolytic cleavage to 5'-phosphomonoester.. Capsid protein (CA) is the structural component of the virus-like particle (VLP), forming the shell that encapsulates the retrotransposons dimeric RNA genome. The particles are assembled from trimer-clustered units and there are holes in the capsid shells that allow for the diffusion of macromolecules. CA also has nucleocapsid-like chaperone activity, promoting primer tRNA(i)-Met annealing to the multipartite primer-binding site (PBS), dimerization of Ty1 RNA and initiation of reverse transcription. Its function is as follows. The aspartyl protease (PR) mediates the proteolytic cleavages of the Gag and Gag-Pol polyproteins after assembly of the VLP. Functionally, reverse transcriptase/ribonuclease H (RT) is a multifunctional enzyme that catalyzes the conversion of the retro-elements RNA genome into dsDNA within the VLP. The enzyme displays a DNA polymerase activity that can copy either DNA or RNA templates, and a ribonuclease H (RNase H) activity that cleaves the RNA strand of RNA-DNA heteroduplexes during plus-strand synthesis and hydrolyzes RNA primers. The conversion leads to a linear dsDNA copy of the retrotransposon that includes long terminal repeats (LTRs) at both ends. In terms of biological role, integrase (IN) targets the VLP to the nucleus, where a subparticle preintegration complex (PIC) containing at least integrase and the newly synthesized dsDNA copy of the retrotransposon must transit the nuclear membrane. Once in the nucleus, integrase performs the integration of the dsDNA into the host genome. This Saccharomyces cerevisiae (strain ATCC 204508 / S288c) (Baker's yeast) protein is Transposon Ty1-DR5 Gag-Pol polyprotein (TY1B-DR5).